Reading from the N-terminus, the 291-residue chain is Elongation factor Ts (291 aa).

The involved in Mg(2+) ion dislocation from EF-Tu stretch occupies residues 79 to 82 (TDFV).

The protein belongs to the EF-Ts family.

The protein localises to the cytoplasm. Its function is as follows. Associates with the EF-Tu.GDP complex and induces the exchange of GDP to GTP. It remains bound to the aminoacyl-tRNA.EF-Tu.GTP complex up to the GTP hydrolysis stage on the ribosome. In Dinoroseobacter shibae (strain DSM 16493 / NCIMB 14021 / DFL 12), this protein is Elongation factor Ts.